Here is a 353-residue protein sequence, read N- to C-terminus: DNA-directed RNA polymerase subunit alpha (353 aa).

The alpha N-terminal domain (alpha-NTD) stretch occupies residues methionine 1–asparagine 245. Residues glutamate 261–glutamate 353 form an alpha C-terminal domain (alpha-CTD) region.

This sequence belongs to the RNA polymerase alpha chain family. In terms of assembly, homodimer. The RNAP catalytic core consists of 2 alpha, 1 beta, 1 beta' and 1 omega subunit. When a sigma factor is associated with the core the holoenzyme is formed, which can initiate transcription.

The catalysed reaction is RNA(n) + a ribonucleoside 5'-triphosphate = RNA(n+1) + diphosphate. Functionally, DNA-dependent RNA polymerase catalyzes the transcription of DNA into RNA using the four ribonucleoside triphosphates as substrates. The sequence is that of DNA-directed RNA polymerase subunit alpha from Mycoplasma sp.